Here is a 274-residue protein sequence, read N- to C-terminus: Diaminopimelate epimerase (274 aa).

N11, Q44, and N64 together coordinate substrate. The Proton donor role is filled by C73. Substrate contacts are provided by residues 74-75, N157, N190, and 208-209; these read GN and ER. C217 acts as the Proton acceptor in catalysis. 218–219 contributes to the substrate binding site; that stretch reads GS.

Belongs to the diaminopimelate epimerase family. Homodimer.

It is found in the cytoplasm. The enzyme catalyses (2S,6S)-2,6-diaminopimelate = meso-2,6-diaminopimelate. It functions in the pathway amino-acid biosynthesis; L-lysine biosynthesis via DAP pathway; DL-2,6-diaminopimelate from LL-2,6-diaminopimelate: step 1/1. Functionally, catalyzes the stereoinversion of LL-2,6-diaminopimelate (L,L-DAP) to meso-diaminopimelate (meso-DAP), a precursor of L-lysine and an essential component of the bacterial peptidoglycan. In Histophilus somni (strain 129Pt) (Haemophilus somnus), this protein is Diaminopimelate epimerase.